Here is a 406-residue protein sequence, read N- to C-terminus: Tyrosine--tRNA ligase (406 aa).

Positions 48–57 match the 'HIGH' region motif; it reads PSRPDLHLGH. Residues 232–236 carry the 'KMSKS' region motif; it reads KMSKS. Lys235 contributes to the ATP binding site. The region spanning 339 to 401 is the S4 RNA-binding domain; the sequence is MPVVELLMAL…GKRKFFKVAR (63 aa).

It belongs to the class-I aminoacyl-tRNA synthetase family. TyrS type 2 subfamily. As to quaternary structure, homodimer.

It is found in the cytoplasm. It carries out the reaction tRNA(Tyr) + L-tyrosine + ATP = L-tyrosyl-tRNA(Tyr) + AMP + diphosphate + H(+). In terms of biological role, catalyzes the attachment of tyrosine to tRNA(Tyr) in a two-step reaction: tyrosine is first activated by ATP to form Tyr-AMP and then transferred to the acceptor end of tRNA(Tyr). This chain is Tyrosine--tRNA ligase, found in Chlorobaculum tepidum (strain ATCC 49652 / DSM 12025 / NBRC 103806 / TLS) (Chlorobium tepidum).